Here is a 644-residue protein sequence, read N- to C-terminus: 1-deoxy-D-xylulose-5-phosphate synthase (644 aa).

Residues His-78 and 120–122 (GHA) each bind thiamine diphosphate. Asp-149 lines the Mg(2+) pocket. Thiamine diphosphate-binding positions include 150–151 (AA), Asn-178, and Glu-373. Asn-178 lines the Mg(2+) pocket.

Belongs to the transketolase family. DXPS subfamily. Homodimer. Mg(2+) serves as cofactor. The cofactor is thiamine diphosphate.

The enzyme catalyses D-glyceraldehyde 3-phosphate + pyruvate + H(+) = 1-deoxy-D-xylulose 5-phosphate + CO2. It participates in metabolic intermediate biosynthesis; 1-deoxy-D-xylulose 5-phosphate biosynthesis; 1-deoxy-D-xylulose 5-phosphate from D-glyceraldehyde 3-phosphate and pyruvate: step 1/1. In terms of biological role, catalyzes the acyloin condensation reaction between C atoms 2 and 3 of pyruvate and glyceraldehyde 3-phosphate to yield 1-deoxy-D-xylulose-5-phosphate (DXP). This Chlamydia caviae (strain ATCC VR-813 / DSM 19441 / 03DC25 / GPIC) (Chlamydophila caviae) protein is 1-deoxy-D-xylulose-5-phosphate synthase.